A 404-amino-acid polypeptide reads, in one-letter code: Serine/threonine transporter SstT (404 aa).

A run of 8 helical transmembrane segments spans residues 17 to 37 (IGIG…LTGF), 39 to 59 (ILGK…VFAL), 75 to 95 (MTLI…VAVL), 138 to 158 (ALAT…GLAL), 179 to 199 (IVVW…FTTI), 212 to 232 (FLIL…NPLI), 287 to 307 (IPLG…VLTL), and 313 to 333 (FGIP…AVSA).

The protein belongs to the dicarboxylate/amino acid:cation symporter (DAACS) (TC 2.A.23) family.

The protein localises to the cell membrane. It catalyses the reaction L-serine(in) + Na(+)(in) = L-serine(out) + Na(+)(out). It carries out the reaction L-threonine(in) + Na(+)(in) = L-threonine(out) + Na(+)(out). Functionally, involved in the import of serine and threonine into the cell, with the concomitant import of sodium (symport system). This is Serine/threonine transporter SstT from Streptococcus pyogenes serotype M12 (strain MGAS2096).